Reading from the N-terminus, the 485-residue chain is RAC-beta serine/threonine-protein kinase B (485 aa).

The PH domain occupies 5–109; the sequence is MVIKEGWLQK…WIIAIQTVAN (105 aa). O-linked (GlcNAc) serine glycans are attached at residues S132 and S135. One can recognise a Protein kinase domain in the interval 156 to 413; that stretch reads FDYLKLLGKG…AQEVMSHGFF (258 aa). ATP contacts are provided by residues 162–170 and K185; that span reads LGKGTFGKV. D279 (proton acceptor) is an active-site residue. O-linked (GlcNAc) threonine glycosylation occurs at T310. Phosphothreonine is present on T313. T317 carries O-linked (GlcNAc) threonine glycosylation. Positions 414 to 485 constitute an AGC-kinase C-terminal domain; that stretch reads ASINWQDVTE…QFSYSSSIRE (72 aa). The tract at residues 454 to 485 is disordered; sequence LTPPDRYDNLDALESEQRPHFPQFSYSSSIRE. The segment covering 458–472 has biased composition (basic and acidic residues); it reads DRYDNLDALESEQRP. A Phosphoserine modification is found at S478. S478 is a glycosylation site (O-linked (GlcNAc) serine; alternate).

It belongs to the protein kinase superfamily. AGC Ser/Thr protein kinase family. RAC subfamily. Post-translationally, phosphorylation on Thr-313 and Ser-478 is required for full activity. Phosphorylation of the activation loop at Thr-313 by PDPK1/PDK1 is a prerequisite for full activation. Phosphorylation by mTORC2 at Ser-478 in response to growth factors plays a key role in AKT1 activation by facilitating subsequent phosphorylation of the activation loop by PDPK1/PDK1.

The catalysed reaction is L-seryl-[protein] + ATP = O-phospho-L-seryl-[protein] + ADP + H(+). It carries out the reaction L-threonyl-[protein] + ATP = O-phospho-L-threonyl-[protein] + ADP + H(+). With respect to regulation, two specific sites, one in the kinase domain (Thr-313) and the other in the C-terminal regulatory region (Ser-478), need to be phosphorylated for its full activation. Its function is as follows. Akt2-b is one of several closely related serine/threonine-protein kinases known as the AKT kinase, and which regulate many processes including metabolism, proliferation, cell survival, growth and angiogenesis. This is mediated through serine and/or threonine phosphorylation of a range of downstream substrates. Over 100 substrate candidates have been reported so far, but for most of them, no isoform specificity has been reported. May be involved in the inhibition of ciliogenesis. In Xenopus laevis (African clawed frog), this protein is RAC-beta serine/threonine-protein kinase B (akt2-b).